A 150-amino-acid chain; its full sequence is Endoribonuclease YbeY (150 aa).

The Zn(2+) site is built by His-102, His-106, and His-112.

Belongs to the endoribonuclease YbeY family. The cofactor is Zn(2+).

The protein localises to the cytoplasm. In terms of biological role, single strand-specific metallo-endoribonuclease involved in late-stage 70S ribosome quality control and in maturation of the 3' terminus of the 16S rRNA. The sequence is that of Endoribonuclease YbeY from Thermotoga sp. (strain RQ2).